A 715-amino-acid polypeptide reads, in one-letter code: Gelsolin, cytoplasmic (715 aa).

The tract at residues 1 to 124 is actin-severing; the sequence is MTTELEIQKA…YLIGGVASGF (124 aa). The Gelsolin-like 1 repeat unit spans residues 24–75; that stretch reads FELVPVPKTNHGKFYTGDSYIILKTTALESGRGFEWNLHYWQGKESSQDERG. The interval 72-75 is actin-actin interfilament contact point; that stretch reads DERG. Residue 136–145 participates in a 1,2-diacyl-sn-glycero-3-phospho-(1D-myo-inositol-4,5-bisphosphate) binding; it reads KVLTRVKGKR. Gelsolin-like repeat units follow at residues 147–187, 260–306, and 405–451; these read VRAT…FEKN, LKIT…TERA, and LRKE…NERT. The segment at 384–715 is actin-binding, Ca-sensitive; that stretch reads AAESKMIDDG…FLGWDKTLWD (332 aa). Ca(2+)-binding residues include G421, D422, E449, T499, N539, D540, E562, D642, and E665. Gelsolin-like repeat units follow at residues 524–564 and 625–667; these read CRAV…SEIQ and FIAE…EEKM.

This sequence belongs to the villin/gelsolin family. Predominantly in the body wall muscle, but expression is not restricted to muscle cells.

Its subcellular location is the cytoplasm. The protein resides in the cytoskeleton. Its function is as follows. Calcium-regulated, actin-modulating protein that binds to the plus (or barbed) ends of actin monomers or filaments, preventing monomer exchange (end-blocking or capping). It can promote the assembly of monomers into filaments (nucleation) as well as sever filaments already formed. This is Gelsolin, cytoplasmic from Halocynthia roretzi (Sea squirt).